A 336-amino-acid chain; its full sequence is N-lysine methyltransferase KMT5A-B (336 aa).

2 disordered regions span residues 1 to 107 and 141 to 165; these read MGRG…SSKQ and QSQK…NRKL. The segment covering 67-93 has biased composition (basic and acidic residues); sequence SVAHHESKNLGKPTTETRKKAEVEKKR. Polar residues predominate over residues 95-104; sequence SSATELSVKS. Residues 146–162 are compositionally biased toward basic residues; the sequence is VKNKSQRRKAQRKKSPN. Positions 200–321 constitute an SET domain; the sequence is DGMKMDMIIG…VGEELLYDYG (122 aa). S-adenosyl-L-methionine contacts are provided by residues 210-212, Tyr-255, and 282-283; these read KGR and NH.

Belongs to the class V-like SAM-binding methyltransferase superfamily. Histone-lysine methyltransferase family. PR/SET subfamily. Phosphorylated during mitosis.

It localises to the nucleus. It is found in the chromosome. The catalysed reaction is L-lysyl(20)-[histone H4] + S-adenosyl-L-methionine = N(6)-methyl-L-lysyl(20)-[histone H4] + S-adenosyl-L-homocysteine + H(+). The enzyme catalyses L-lysyl-[protein] + S-adenosyl-L-methionine = N(6)-methyl-L-lysyl-[protein] + S-adenosyl-L-homocysteine + H(+). Functionally, protein-lysine N-methyltransferase that monomethylates both histones and non-histone proteins. Specifically monomethylates 'Lys-20' of histone H4 (H4K20me1). H4K20me1 is enriched during mitosis and represents a specific tag for epigenetic transcriptional repression. Mainly functions in euchromatin regions, thereby playing a central role in the silencing of euchromatic genes. Required for cell proliferation, probably by contributing to the maintenance of proper higher-order structure of DNA during mitosis. Involved in chromosome condensation and proper cytokinesis. In Xenopus laevis (African clawed frog), this protein is N-lysine methyltransferase KMT5A-B.